Consider the following 326-residue polypeptide: Transcription cofactor vestigial-like protein 3 (326 aa).

Positions 57 to 80 (VTLPSKQEEEDEEEEEEEKDQPAE) are disordered. K62 is covalently cross-linked (Glycyl lysine isopeptide (Lys-Gly) (interchain with G-Cter in SUMO2)). Positions 64-75 (EEEDEEEEEEEK) are enriched in acidic residues. A Glycyl lysine isopeptide (Lys-Gly) (interchain with G-Cter in SUMO2) cross-link involves residue K126. 2 disordered regions span residues 175–203 (PPGT…PPAV) and 233–256 (HAHM…SALD). A compositionally biased stretch (basic residues) spans 233–249 (HAHMHHRHRHHHHHHHP).

The protein belongs to the vestigial family. In terms of tissue distribution, enriched in placenta.

It localises to the nucleus. In terms of biological role, may act as a specific coactivator for the mammalian TEFs. This chain is Transcription cofactor vestigial-like protein 3 (VGLL3), found in Homo sapiens (Human).